The following is a 474-amino-acid chain: Trifunctional enzyme subunit beta, mitochondrial (474 aa).

The N-terminal 33 residues, 1–33, are a transit peptide targeting the mitochondrion; the sequence is MTILTYPFKNLPTASKWALRFSIRPLSCSSQLR. N6-acetyllysine; alternate is present on Lys-72. Lys-72 bears the N6-succinyllysine; alternate mark. Cys-138 functions as the Acyl-thioester intermediate in the catalytic mechanism. An intramembrane segment occupies 173-220; the sequence is IRHSRKMRKLMLDLNKAKSMGQRLSLISKFRFNFLAPELPAVSEFSTS. Lys-188 is subject to N6-acetyllysine; alternate. N6-succinyllysine; alternate is present on Lys-188. N6-succinyllysine is present on residues Lys-190, Lys-272, and Lys-291. The residue at position 293 (Lys-293) is an N6-acetyllysine; alternate. Residue Lys-293 is modified to N6-succinyllysine; alternate. Lys-298 is modified (N6-acetyllysine). Lys-332 carries the post-translational modification N6-acetyllysine; alternate. Lys-332 carries the post-translational modification N6-succinyllysine; alternate. An N6-acetyllysine mark is found at Lys-348 and Lys-361. Cys-458 serves as the catalytic Proton donor/acceptor.

It belongs to the thiolase-like superfamily. Thiolase family. As to quaternary structure, heterotetramer of 2 alpha/HADHA and 2 beta/HADHB subunits; forms the mitochondrial trifunctional enzyme. Also purified as higher order heterooligomers including a 4 alpha/HADHA and 4 beta/HADHB heterooligomer which physiological significance remains unclear. The mitochondrial trifunctional enzyme interacts with MTLN. Interacts with RSAD2/viperin.

It localises to the mitochondrion. The protein resides in the mitochondrion inner membrane. The protein localises to the mitochondrion outer membrane. It is found in the endoplasmic reticulum. It catalyses the reaction an acyl-CoA + acetyl-CoA = a 3-oxoacyl-CoA + CoA. The catalysed reaction is butanoyl-CoA + acetyl-CoA = 3-oxohexanoyl-CoA + CoA. The enzyme catalyses hexanoyl-CoA + acetyl-CoA = 3-oxooctanoyl-CoA + CoA. It carries out the reaction octanoyl-CoA + acetyl-CoA = 3-oxodecanoyl-CoA + CoA. It catalyses the reaction decanoyl-CoA + acetyl-CoA = 3-oxododecanoyl-CoA + CoA. The catalysed reaction is dodecanoyl-CoA + acetyl-CoA = 3-oxotetradecanoyl-CoA + CoA. The enzyme catalyses tetradecanoyl-CoA + acetyl-CoA = 3-oxohexadecanoyl-CoA + CoA. Its pathway is lipid metabolism; fatty acid beta-oxidation. Functionally, mitochondrial trifunctional enzyme catalyzes the last three of the four reactions of the mitochondrial beta-oxidation pathway. The mitochondrial beta-oxidation pathway is the major energy-producing process in tissues and is performed through four consecutive reactions breaking down fatty acids into acetyl-CoA. Among the enzymes involved in this pathway, the trifunctional enzyme exhibits specificity for long-chain fatty acids. Mitochondrial trifunctional enzyme is a heterotetrameric complex composed of two proteins, the trifunctional enzyme subunit alpha/HADHA carries the 2,3-enoyl-CoA hydratase and the 3-hydroxyacyl-CoA dehydrogenase activities, while the trifunctional enzyme subunit beta/HADHB described here bears the 3-ketoacyl-CoA thiolase activity. This Homo sapiens (Human) protein is Trifunctional enzyme subunit beta, mitochondrial (HADHB).